The following is a 191-amino-acid chain: dCTP deaminase, dUMP-forming (191 aa).

Residues 101-106 (KSSLGR), aspartate 119, 127-129 (TLE), glutamine 148, tyrosine 162, and glutamine 174 each bind dCTP. The active-site Proton donor/acceptor is glutamate 129.

This sequence belongs to the dCTP deaminase family. Homotrimer.

The catalysed reaction is dCTP + 2 H2O = dUMP + NH4(+) + diphosphate. The protein operates within pyrimidine metabolism; dUMP biosynthesis; dUMP from dCTP: step 1/1. Functionally, bifunctional enzyme that catalyzes both the deamination of dCTP to dUTP and the hydrolysis of dUTP to dUMP without releasing the toxic dUTP intermediate. The protein is dCTP deaminase, dUMP-forming of Streptomyces avermitilis (strain ATCC 31267 / DSM 46492 / JCM 5070 / NBRC 14893 / NCIMB 12804 / NRRL 8165 / MA-4680).